A 441-amino-acid polypeptide reads, in one-letter code: MTTTIRHFSSGSIKGSSGLAGGSSRSCRVSGSLGGGSCRLGSAGGLGSGLGGSSYSSCYSFGSGGGYGSGGYVSGGYGGGFGGVDGLLVGGEKATMQNLNDRLASYLDKVRALEEANTELELKIRDWYQKQAPGPAPDYSSYFKTIEDLRNKIHTATVDNANLLLQIDNARLAADDFRTKFETEQALRVSVEADINGLRRVLDELTLARADLEMQIENLKEELAYLRKNHEEEMKALRGQVGGEINVEMDAAPGVDLSRILNEMRDQYEKMAEKNRKDAEDWFFSKTEELNREVATNSELVQSGKSEISELRRTLQALEIELQSQLSMKASLEGSLAETENRYCMQLSQIQGLIGSVEEQLAQLRCEMEQQNQEYKILLDVKTRLEQEIATYRRLLEGEDAHLTQYKTKEPVTTRQVRTIVEEVQDGRVISSREQVHQTSH.

The tract at residues 1–23 is disordered; sequence MTTTIRHFSSGSIKGSSGLAGGS. A head region spans residues 1 to 91; sequence MTTTIRHFSS…GGVDGLLVGG (91 aa). The span at 9–23 shows a compositional bias: low complexity; sequence SSGSIKGSSGLAGGS. A Phosphoserine modification is found at serine 12. Lysine 14 is covalently cross-linked (Glycyl lysine isopeptide (Lys-Gly) (interchain with G-Cter in SUMO1); alternate). Lysine 14 is covalently cross-linked (Glycyl lysine isopeptide (Lys-Gly) (interchain with G-Cter in SUMO2); alternate). Serine 24, serine 30, serine 32, and serine 37 each carry phosphoserine. Residue serine 42 is modified to Phosphoserine; by RPS6KA1. The tract at residues 92–128 is coil 1A; it reads EKATMQNLNDRLASYLDKVRALEEANTELELKIRDWY. The 312-residue stretch at 92–403 folds into the IF rod domain; sequence EKATMQNLND…RLLEGEDAHL (312 aa). Residue threonine 118 is modified to Phosphothreonine. The linker 1 stretch occupies residues 129 to 146; that stretch reads QKQAPGPAPDYSSYFKTI. The interval 147 to 238 is coil 1B; sequence EDLRNKIHTA…NHEEEMKALR (92 aa). The interval 239–258 is linker 12; the sequence is GQVGGEINVEMDAAPGVDLS. Positions 259-400 are coil 2; the sequence is RILNEMRDQY…TYRRLLEGED (142 aa). Lysine 286 participates in a covalent cross-link: Glycyl lysine isopeptide (Lys-Gly) (interchain with G-Cter in SUMO2). Threonine 287 is subject to Phosphothreonine. Position 331 is a phosphoserine (serine 331). Residues 401 to 441 form a tail region; sequence AHLTQYKTKEPVTTRQVRTIVEEVQDGRVISSREQVHQTSH. Residues lysine 407 and lysine 409 each participate in a glycyl lysine isopeptide (Lys-Gly) (interchain with G-Cter in SUMO1); alternate cross-link. Residues lysine 407 and lysine 409 each participate in a glycyl lysine isopeptide (Lys-Gly) (interchain with G-Cter in SUMO2); alternate cross-link.

The protein belongs to the intermediate filament family. Heterodimer of a type I and a type II keratin. KRT17 associates with KRT6 isomers (KRT6A or KRT6B). Interacts with TRADD and SFN. Phosphorylation at Ser-42 occurs in a growth- and stress-dependent fashion in skin keratinocytes, it has no effect on filament organization.

The protein resides in the cytoplasm. Functionally, type I keratin involved in the formation and maintenance of various skin appendages, specifically in determining shape and orientation of hair. Required for the correct growth of hair follicles, in particular for the persistence of the anagen (growth) state. Modulates the function of TNF-alpha in the specific context of hair cycling. Regulates protein synthesis and epithelial cell growth through binding to the adapter protein SFN and by stimulating Akt/mTOR pathway. Involved in tissue repair. May be a marker of basal cell differentiation in complex epithelia and therefore indicative of a certain type of epithelial 'stem cells'. Acts as a promoter of epithelial proliferation by acting a regulator of immune response in skin: promotes Th1/Th17-dominated immune environment contributing to the development of basaloid skin tumors. May act as an autoantigen in the immunopathogenesis of psoriasis, with certain peptide regions being a major target for autoreactive T-cells and hence causing their proliferation. The protein is Keratin, type I cytoskeletal 17 of Bos taurus (Bovine).